Reading from the N-terminus, the 308-residue chain is Hydroxyacylglutathione hydrolase, mitochondrial (308 aa).

The transit peptide at 1–13 directs the protein to the mitochondrion; the sequence is MVVGRGLLGRRSL. Histidine 102, histidine 104, aspartate 106, and histidine 107 together coordinate Zn(2+). Lysine 116 carries the N6-acetyllysine modification. Zn(2+) contacts are provided by histidine 158 and aspartate 182. Substrate-binding positions include 191 to 193 and 221 to 223; these read KFY and HEY. Histidine 221 is a binding site for Zn(2+). N6-acetyllysine; alternate is present on lysine 229. At lysine 229 the chain carries N6-succinyllysine; alternate. 297–300 is a binding site for substrate; sequence RREK.

Belongs to the metallo-beta-lactamase superfamily. Glyoxalase II family. As to quaternary structure, monomer. Zn(2+) is required as a cofactor. In terms of tissue distribution, expressed in liver and kidney.

It localises to the mitochondrion matrix. The protein resides in the cytoplasm. The catalysed reaction is an S-(2-hydroxyacyl)glutathione + H2O = a 2-hydroxy carboxylate + glutathione + H(+). It catalyses the reaction (R)-S-lactoylglutathione + H2O = (R)-lactate + glutathione + H(+). Its pathway is secondary metabolite metabolism; methylglyoxal degradation; (R)-lactate from methylglyoxal: step 2/2. Its function is as follows. Thiolesterase that catalyzes the hydrolysis of S-D-lactoyl-glutathione to form glutathione and D-lactic acid. This Homo sapiens (Human) protein is Hydroxyacylglutathione hydrolase, mitochondrial (HAGH).